Consider the following 444-residue polypeptide: Tryptophan 5-hydroxylase 1 (444 aa).

Residues Thr19–Asn94 form the ACT domain. Ser58 bears the Phosphoserine; by PKA mark. Positions 235, 257, and 265 each coordinate L-tryptophan. Fe cation is bound by residues His272, His277, and Glu317. L-tryptophan contacts are provided by Ser336 and Ile366.

This sequence belongs to the biopterin-dependent aromatic amino acid hydroxylase family. In terms of assembly, homotetramer. Interacts with DNAJC12. It depends on Fe(2+) as a cofactor. In terms of processing, ubiquitinated, leading to its degradation by the proteasome. Ubiquitinated is triggered by phosphorylation. Post-translationally, phosphorylated; triggering degradation by the proteasome.

It catalyses the reaction (6R)-L-erythro-5,6,7,8-tetrahydrobiopterin + L-tryptophan + O2 = 5-hydroxy-L-tryptophan + (4aS,6R)-4a-hydroxy-L-erythro-5,6,7,8-tetrahydrobiopterin. Its pathway is aromatic compound metabolism; serotonin biosynthesis; serotonin from L-tryptophan: step 1/2. Oxidizes L-tryptophan to 5-hydroxy-l-tryptophan in the rate-determining step of serotonin biosynthesis. This is Tryptophan 5-hydroxylase 1 (TPH1) from Oryctolagus cuniculus (Rabbit).